Here is a 96-residue protein sequence, read N- to C-terminus: UPF0235 protein YggU (96 aa).

Belongs to the UPF0235 family.

In Escherichia coli O157:H7, this protein is UPF0235 protein YggU.